A 385-amino-acid polypeptide reads, in one-letter code: Aspartate carbamoyltransferase 2, chloroplastic (385 aa).

Residues M1 to S30 constitute a chloroplast transit peptide. 2 residues coordinate carbamoyl phosphate: R131 and T132. UMP contacts are provided by R131 and T132. Residue K161 coordinates L-aspartate. The carbamoyl phosphate site is built by R182, H210, and Q213. 2 residues coordinate UMP: R182 and H210. Residues R243 and R305 each contribute to the UMP site. L-aspartate-binding residues include R243 and R305. Residues L345 and P346 each coordinate carbamoyl phosphate.

The protein belongs to the aspartate/ornithine carbamoyltransferase superfamily. ATCase family. In terms of assembly, homotrimer.

Its subcellular location is the plastid. It localises to the chloroplast. It carries out the reaction carbamoyl phosphate + L-aspartate = N-carbamoyl-L-aspartate + phosphate + H(+). The protein operates within pyrimidine metabolism; UMP biosynthesis via de novo pathway; (S)-dihydroorotate from bicarbonate: step 2/3. Its activity is regulated as follows. Feedback inhibited by UMP. Catalyzes the condensation of carbamoyl phosphate and aspartate to form carbamoyl aspartate and inorganic phosphate, the committed step in the de novo pyrimidine nucleotide biosynthesis pathway. This Pisum sativum (Garden pea) protein is Aspartate carbamoyltransferase 2, chloroplastic (PYRB2).